A 502-amino-acid chain; its full sequence is RxLR effector protein BLN06 (502 aa).

A signal peptide spans M1–A20. N38 carries N-linked (GlcNAc...) asparagine glycosylation. A dEER motif is present at residues L50–R53.

It belongs to the RxLR effector family.

It localises to the secreted. The protein localises to the host cell membrane. Secreted effector that triggers a robust hypersensitive response (HR) in Lactuca serriola LS102. The response to BLN06 was visible as chlorosis but not as strong necrosis. This chain is RxLR effector protein BLN06, found in Bremia lactucae (Lettuce downy mildew).